A 275-amino-acid polypeptide reads, in one-letter code: MPIKTFKPYTQSRRHMSVSSFSNITKTSPEKSLTKIIKKKGGRNNTGQIMVRFRGGGHKRFYRIIDFKRDKFNIPAEVMSIEYDPNRSSSIALLQYLDGEKRYILYPLGVNVGDLLVSGPDAGIKPGNSLPISNIPVGTFVHNLELVEGKGGQFVRSAGVAAQILAKEGDYAHVRMPSGEIRLIRVKCYATIGQVGNLDHENITLGSAGRNRHMGRKPHVRGTAMNAVDHPHGGGRGRSKGNNQPRSPWNQPAKGFKTRPKKIWDWVIISRRNKS.

A disordered region spans residues Gly-222–Lys-257. Positions Lys-240–Asn-250 are enriched in polar residues.

This sequence belongs to the universal ribosomal protein uL2 family. As to quaternary structure, part of the 50S ribosomal subunit. Forms a bridge to the 30S subunit in the 70S ribosome.

Functionally, one of the primary rRNA binding proteins. Required for association of the 30S and 50S subunits to form the 70S ribosome, for tRNA binding and peptide bond formation. It has been suggested to have peptidyltransferase activity; this is somewhat controversial. Makes several contacts with the 16S rRNA in the 70S ribosome. This chain is Large ribosomal subunit protein uL2, found in Endomicrobium trichonymphae.